The following is a 70-amino-acid chain: DNA-directed RNA polymerase subunit epsilon (70 aa).

It belongs to the RNA polymerase subunit epsilon family. In terms of assembly, RNAP is composed of a core of 2 alpha, a beta and a beta' subunit. The core is associated with a delta subunit, and at least one of epsilon or omega. When a sigma factor is associated with the core the holoenzyme is formed, which can initiate transcription.

It carries out the reaction RNA(n) + a ribonucleoside 5'-triphosphate = RNA(n+1) + diphosphate. Its function is as follows. A non-essential component of RNA polymerase (RNAP). This is DNA-directed RNA polymerase subunit epsilon from Lacticaseibacillus casei (strain BL23) (Lactobacillus casei).